A 61-amino-acid polypeptide reads, in one-letter code: Metallothionein-2E (61 aa).

Position 1 is an N-acetylmethionine (methionine 1). The segment at methionine 1–cysteine 29 is beta. 20 residues coordinate a divalent metal cation: cysteine 5, cysteine 7, cysteine 13, cysteine 15, cysteine 19, cysteine 21, cysteine 24, cysteine 26, cysteine 29, cysteine 33, cysteine 34, cysteine 36, cysteine 37, cysteine 41, cysteine 44, cysteine 48, cysteine 50, cysteine 57, cysteine 59, and cysteine 60. The segment at lysine 30–alanine 61 is alpha.

It belongs to the metallothionein superfamily. Type 1 family. As to quaternary structure, monomer.

Its function is as follows. Metallothioneins have a high content of cysteine residues that bind various heavy metals; these proteins are transcriptionally regulated by both heavy metals and glucocorticoids. This chain is Metallothionein-2E, found in Oryctolagus cuniculus (Rabbit).